A 1193-amino-acid chain; its full sequence is Dynamin-like protein A (1193 aa).

The tract at residues 1–609 (MTDQNRKELL…AFRERVKRLE (609 aa)) is D1, associates with and fuses membranes, tethers lipsomes. A G1 motif D1 region spans residues 50-57 (GHYSAGKS). Residues 76-78 (TSA) form a G2 motif D1 region. A G3 motif D1 region spans residues 141-144 (DTPG). Positions 199–202 (NQID) are G4 motif D1. A D2, does not associate with membranes region spans residues 561–1193 (MPKSEIKMEQ…WKNSDNTIKM (633 aa)). Positions 619–626 (GGFSSGKS) are G1 motif D2. The interval 645–647 (TTA) is G2 motif D2. The tract at residues 774–777 (DTPG) is G3 motif D2. Positions 837–840 (NAAD) are G4 motif D2.

Belongs to the TRAFAC class dynamin-like GTPase superfamily. Dynamin/Fzo/YdjA family. Homodimer in solution. Both D1 and D2 domains interact with YwpG, YneK interacts only with D1 while RNase Y (rny) only interacts with whole protein. Probably oligomerizes at damaged membrane sites. The cofactor is Mg(2+).

The protein localises to the cell membrane. It carries out the reaction GTP + H2O = GDP + phosphate + H(+). In terms of biological role, mediates lipid mixing of vesicles and full mixing of their contents in the absence and presence of GTP. Tethers and mixes small vesicles better than larger ones, indicating a curvature preference. GTP slows down DynA-mediated lipid fusion, perhaps controlling its activity. Prefers phospholipid composition close to the B.subtilis membrane; requires phosphatidylglycerol for fusion has no activity on pure phosphatidylethanolamine vesicles. Regulates membrane lipid diffusion. Required to prevent membrane damage when exposed to low levels of membrane-damaging antibiotics or to bacteriophage. Probably surveys the cell membrane for stress; localizes to sites of membrane damage (treatment with nisin) and forms foci in cells treated with pore-forming compounds (CCCP). May assist membrane repair, possibly by membrane tethering and fusion. Probably functions both in early and late cell division, affects the proper formation of the FtsZ ring. Plays a non-redundant role with flottilin (floT) in membrane dynamics and cell shape. Probably able to bend membranes. Tethers liposomes and mediates their fusion; this does not require GTPase activity or the presence of GTP. Both GTPase domains (dynamin-type G) are required for GTPase activity. Its function is as follows. Has intrinsic affinity for membranes and membrane distortion capability; causes tubulation and membrane distortion when expressed in a Drosophila cell line. In Bacillus subtilis (strain 168), this protein is Dynamin-like protein A.